Reading from the N-terminus, the 449-residue chain is UDP-N-acetylmuramate--L-alanine ligase (449 aa).

An ATP-binding site is contributed by 121 to 127 (GAHGKSS).

Belongs to the MurCDEF family.

The protein localises to the cytoplasm. The catalysed reaction is UDP-N-acetyl-alpha-D-muramate + L-alanine + ATP = UDP-N-acetyl-alpha-D-muramoyl-L-alanine + ADP + phosphate + H(+). The protein operates within cell wall biogenesis; peptidoglycan biosynthesis. Cell wall formation. This Helicobacter pylori (strain J99 / ATCC 700824) (Campylobacter pylori J99) protein is UDP-N-acetylmuramate--L-alanine ligase.